Consider the following 619-residue polypeptide: Chaperone protein HscA homolog (619 aa).

This sequence belongs to the heat shock protein 70 family.

In terms of biological role, chaperone involved in the maturation of iron-sulfur cluster-containing proteins. Has a low intrinsic ATPase activity which is markedly stimulated by HscB. The protein is Chaperone protein HscA homolog of Haemophilus influenzae (strain PittGG).